A 186-amino-acid chain; its full sequence is Testis-expressed protein 36 (186 aa).

Residues 1–52 (MTKGRRFNPPSDKDGRWFPHIGLTQKTPESITSATSKEPQSPHLPRQAEGKL) form a disordered region. The span at 24 to 39 (TQKTPESITSATSKEP) shows a compositional bias: polar residues.

The sequence is that of Testis-expressed protein 36 (TEX36) from Homo sapiens (Human).